A 374-amino-acid chain; its full sequence is Pectate lyase 2 (374 aa).

The signal sequence occupies residues methionine 1 to alanine 22. The cysteines at positions 93 and 176 are disulfide-linked. Ca(2+)-binding residues include aspartate 150, aspartate 152, glutamate 187, and aspartate 191. Arginine 239 is a catalytic residue. Cysteine 350 and cysteine 373 are disulfide-bonded.

Belongs to the polysaccharide lyase 1 family. PLADES subfamily. Requires Ca(2+) as cofactor.

It localises to the secreted. The enzyme catalyses Eliminative cleavage of (1-&gt;4)-alpha-D-galacturonan to give oligosaccharides with 4-deoxy-alpha-D-galact-4-enuronosyl groups at their non-reducing ends.. It participates in glycan metabolism; pectin degradation; 2-dehydro-3-deoxy-D-gluconate from pectin: step 2/5. Functionally, involved in maceration and soft-rotting of plant tissue. The chain is Pectate lyase 2 (pel2) from Pectobacterium carotovorum (Erwinia carotovora).